The following is a 484-amino-acid chain: MDFTSLETTTFEEVVIALGSNVGNRMNNFKEALRLMKDYGISVTRHSCLYETEPVHVTDQPRFLNAAIRGVTKLKPHELLNVLKKIEKEMGREENGLRYGPRPLDLDILFYGKHKIISDKLIIPHERIWERPFVLAPLVDLLGTEDIDNDKIVAYWHSLSMHSGGIFQAWERLGGESLLGKDGIIQRVIPIGDHLWDFSKKTYVMGILNLTPDSFSDGGKFQSVDTAVSRVRSMISEGVDIIDIGAQSTRPMASRISSQEEIDRLIPVLKVVRGMAEMKGKLISVDTFNSEVALEAIRNGADILNDVSGGSLDENMHKVVADSDVPYMIMHMRGDPCTMQNKENLEYNEICKDVATELYERVREAELSGIPAWRIMIDPGIGFSKGIDHNLDIVMELPKIREEMAKKSIGLSHAPILIGPSRKRFLGDICGRPEASERDAATVACVTAGILKGANIIRVHNVRDNVDAARLCDAMMTKRFKNVD.

Residues 15-141 (VIALGSNVGN…PFVLAPLVDL (127 aa)) are HPPK. Residues 202-470 (TYVMGILNLT…NVRDNVDAAR (269 aa)) form the Pterin-binding domain. Residues 204–484 (VMGILNLTPD…MMTKRFKNVD (281 aa)) form a DHPS region. Asn209 serves as a coordination point for Mg(2+). (7,8-dihydropterin-6-yl)methyl diphosphate-binding positions include Thr249, Asp286, Asn305, Asp378, Lys423, and 458 to 460 (RVH).

It in the N-terminal section; belongs to the HPPK family. In the C-terminal section; belongs to the DHPS family. Mg(2+) is required as a cofactor. In terms of tissue distribution, expressed exclusively in reproductive tissues.

It is found in the cytoplasm. It localises to the cytosol. The enzyme catalyses 6-hydroxymethyl-7,8-dihydropterin + ATP = (7,8-dihydropterin-6-yl)methyl diphosphate + AMP + H(+). The catalysed reaction is (7,8-dihydropterin-6-yl)methyl diphosphate + 4-aminobenzoate = 7,8-dihydropteroate + diphosphate. The protein operates within cofactor biosynthesis; tetrahydrofolate biosynthesis; 2-amino-4-hydroxy-6-hydroxymethyl-7,8-dihydropteridine diphosphate from 7,8-dihydroneopterin triphosphate: step 4/4. It functions in the pathway cofactor biosynthesis; tetrahydrofolate biosynthesis; 7,8-dihydrofolate from 2-amino-4-hydroxy-6-hydroxymethyl-7,8-dihydropteridine diphosphate and 4-aminobenzoate: step 1/2. Its activity is regulated as follows. Inhibited by sulfanilamide. Functionally, catalyzes the first two consecutive steps of tetrahydrofolate biosynthesis. Plays a role in seed stress response and survival. The sequence is that of Folate synthesis bifunctional protein from Arabidopsis thaliana (Mouse-ear cress).